We begin with the raw amino-acid sequence, 187 residues long: UPF0301 protein ECA3925 (187 aa).

Belongs to the UPF0301 (AlgH) family.

This Pectobacterium atrosepticum (strain SCRI 1043 / ATCC BAA-672) (Erwinia carotovora subsp. atroseptica) protein is UPF0301 protein ECA3925.